Reading from the N-terminus, the 332-residue chain is Probable cytosolic iron-sulfur protein assembly protein 1 (332 aa).

WD repeat units follow at residues 9–48, 52–93, 98–137, 144–183, 188–230, 257–295, and 302–332; these read GHTD…LVTT, GHNR…WQFL, GHEN…DEFE, DHTQ…WICV, GHES…GGTG, AHTR…QWVV, and AHGV…IWEV.

It belongs to the WD repeat CIA1 family. Interacts with NAR1.

The protein localises to the cytoplasm. It localises to the nucleus. In terms of biological role, essential component of the cytosolic iron-sulfur (Fe/S) protein assembly machinery. Required for the maturation of extramitochondrial Fe/S proteins. This is Probable cytosolic iron-sulfur protein assembly protein 1 from Yarrowia lipolytica (strain CLIB 122 / E 150) (Yeast).